The chain runs to 779 residues: 3-isopropylmalate dehydratase (779 aa).

Cys-360, Cys-421, and Cys-424 together coordinate [4Fe-4S] cluster. Residues 484–518 are disordered; sequence QDQSSPKVEVTSEDEKELESAAYDHAEPVQPEDAP. Ser-488 carries the post-translational modification Phosphoserine. A Phosphothreonine modification is found at Thr-494. A Phosphoserine modification is found at Ser-495. Residues 501–510 show a composition bias toward basic and acidic residues; it reads LESAAYDHAE.

The protein belongs to the aconitase/IPM isomerase family. Monomer. [4Fe-4S] cluster serves as cofactor.

It carries out the reaction (2R,3S)-3-isopropylmalate = (2S)-2-isopropylmalate. It functions in the pathway amino-acid biosynthesis; L-leucine biosynthesis; L-leucine from 3-methyl-2-oxobutanoate: step 2/4. In terms of biological role, catalyzes the isomerization between 2-isopropylmalate and 3-isopropylmalate, via the formation of 2-isopropylmaleate. This Saccharomyces cerevisiae (strain ATCC 204508 / S288c) (Baker's yeast) protein is 3-isopropylmalate dehydratase (LEU1).